A 274-amino-acid polypeptide reads, in one-letter code: Penicillin-insensitive murein endopeptidase (274 aa).

Residues 1-19 form the signal peptide; the sequence is MNKTAIALLALLASSASLA. Cystine bridges form between cysteine 44–cysteine 265, cysteine 187–cysteine 235, and cysteine 216–cysteine 223. 6 residues coordinate Zn(2+): histidine 110, histidine 113, aspartate 120, aspartate 147, histidine 150, and histidine 211. The interval 228–265 is disordered; the sequence is LPPPGDGCGAELQSWFAPPKPGTTKPEKKTPPPLPPSC.

This sequence belongs to the peptidase M74 family. Dimer. Zn(2+) serves as cofactor.

The protein localises to the periplasm. Its function is as follows. Murein endopeptidase that cleaves the D-alanyl-meso-2,6-diamino-pimelyl amide bond that connects peptidoglycan strands. Likely plays a role in the removal of murein from the sacculus. This chain is Penicillin-insensitive murein endopeptidase, found in Shigella boydii serotype 18 (strain CDC 3083-94 / BS512).